An 82-amino-acid chain; its full sequence is Protein RALF-like 8 (82 aa).

Positions 1 to 28 (MGMSKSIKVILSLALVVFLALAGTKVEA) are cleaved as a signal peptide. 2 disulfides stabilise this stretch: Cys47–Cys55 and Cys67–Cys73.

Belongs to the plant rapid alkalinization factor (RALF) family. As to expression, expressed in leaves and flowers.

It localises to the secreted. Its function is as follows. Cell signaling peptide that may regulate plant stress, growth, and development. Mediates a rapid alkalinization of extracellular space by mediating a transient increase in the cytoplasmic Ca(2+) concentration leading to a calcium-dependent signaling events through a cell surface receptor and a concomitant activation of some intracellular mitogen-activated protein kinases. The sequence is that of Protein RALF-like 8 (RALFL8) from Arabidopsis thaliana (Mouse-ear cress).